Here is a 704-residue protein sequence, read N- to C-terminus: Phosphate acetyltransferase (704 aa).

Residues 379–704 are phosphate acetyltransferase; it reads AFRYQVVQRA…AIQADAQAPA (326 aa).

In the N-terminal section; belongs to the CobB/CobQ family. The protein in the C-terminal section; belongs to the phosphate acetyltransferase and butyryltransferase family. Homohexamer.

It localises to the cytoplasm. It carries out the reaction acetyl-CoA + phosphate = acetyl phosphate + CoA. It functions in the pathway metabolic intermediate biosynthesis; acetyl-CoA biosynthesis; acetyl-CoA from acetate: step 2/2. With respect to regulation, activity is increased under anaerobic growth conditions. Functionally, involved in acetate metabolism. In combination with LdhA and AckA, allows fermentation of pyruvate, enhancing long-term survival under anaerobic conditions. The protein is Phosphate acetyltransferase (pta) of Pseudomonas aeruginosa (strain ATCC 15692 / DSM 22644 / CIP 104116 / JCM 14847 / LMG 12228 / 1C / PRS 101 / PAO1).